Here is an 839-residue protein sequence, read N- to C-terminus: Probable beta-glucosidase I (839 aa).

An N-linked (GlcNAc...) asparagine glycan is attached at N197. D225 is a catalytic residue. The 161-residue stretch at 396 to 556 (DGKTGFKFRV…TQEELISKAV (161 aa)) folds into the PA14 domain. The N-linked (GlcNAc...) asparagine glycan is linked to N494.

It belongs to the glycosyl hydrolase 3 family.

Its subcellular location is the secreted. The enzyme catalyses Hydrolysis of terminal, non-reducing beta-D-glucosyl residues with release of beta-D-glucose.. The protein operates within glycan metabolism; cellulose degradation. Beta-glucosidases are one of a number of cellulolytic enzymes, and catalyze the last step releasing glucose from the inhibitory cellobiose. This Emericella nidulans (strain FGSC A4 / ATCC 38163 / CBS 112.46 / NRRL 194 / M139) (Aspergillus nidulans) protein is Probable beta-glucosidase I (bglI).